Here is a 290-residue protein sequence, read N- to C-terminus: MKLSVSIFVLLAVSAFGGGSAAAVSGKSEAAEIEAGDRLDALRDQLQRYETPIIQTILARSALGGRAPSEQDEVRAALSRNAFEPSEVISEWLQTESGARFRSTRPLPPAVEFITPVVLSRDTVLDKPVVGKGIFPIGRRPQDPTNMDEFLDTSLLSLNQSSTVDLASAVSLDVSLLHLVSARVLLGYPIALAKFDWLHDNFCHILTNTTLSKSQKLANIIQQLTDHKQEVNVLSRVEQKSKSLSHLFRNDIPYPPHTQDRILRLFQAYLIPITTQIEAAAILDHANKCT.

The signal sequence occupies residues 1–21; the sequence is MKLSVSIFVLLAVSAFGGGSA. The tract at residues 117–140 is KWL1-binding extensive loop region (ELR); it reads VVLSRDTVLDKPVVGKGIFPIGRR. 2 N-linked (GlcNAc...) asparagine glycosylation sites follow: Asn-159 and Asn-208.

As to quaternary structure, homodimer. Forms a heterodimer with the host cytosolic chorismate mutase CM2. Interacts with the host kiwellin KWL1 which acts as a defense protein that protects maize from infection.

The protein localises to the secreted. It is found in the host cytoplasm. Its subcellular location is the host cytosol. The catalysed reaction is chorismate = prephenate. Contrary to classical chorismate mutases, CMU1 is not subject to allosteric regulation by tryptophan and tyrosine. Activity is decreased in a non-competitive and allosteric manner by the binding of the host defense kiwellin KWL1 which probably blocks substrate access to the active site of CMU1. Secreted chorismate mutase that is one component of a cocktail of effectors shaping the host metabolome and acting as virulence factors. The enzyme is taken up by plant cells, can spread to neighboring cells where it affects the biosynthesis of the plant immune signal salicylic acid by channelling chorismate into the phenylpropanoid pathway. Interferes with the activity of host cytosolic chorismate mutase CM2 through heterodimerization. This chain is Secreted chorismate mutase (CMU1), found in Mycosarcoma maydis (Corn smut fungus).